Here is a 41-residue protein sequence, read N- to C-terminus: Large ribosomal subunit protein bL36 (41 aa).

Belongs to the bacterial ribosomal protein bL36 family.

This Bartonella quintana (strain Toulouse) (Rochalimaea quintana) protein is Large ribosomal subunit protein bL36.